A 790-amino-acid polypeptide reads, in one-letter code: Endonuclease MutS2 (790 aa).

Residue 334 to 341 (GPNTGGKT) participates in ATP binding. Residues 713–788 (LDVRGMTLDD…GDGVTIVELH (76 aa)) enclose the Smr domain.

The protein belongs to the DNA mismatch repair MutS family. MutS2 subfamily. Homodimer. Binds to stalled ribosomes, contacting rRNA.

Functionally, endonuclease that is involved in the suppression of homologous recombination and thus may have a key role in the control of bacterial genetic diversity. Its function is as follows. Acts as a ribosome collision sensor, splitting the ribosome into its 2 subunits. Detects stalled/collided 70S ribosomes which it binds and splits by an ATP-hydrolysis driven conformational change. Acts upstream of the ribosome quality control system (RQC), a ribosome-associated complex that mediates the extraction of incompletely synthesized nascent chains from stalled ribosomes and their subsequent degradation. Probably generates substrates for RQC. The protein is Endonuclease MutS2 of Caldanaerobacter subterraneus subsp. tengcongensis (strain DSM 15242 / JCM 11007 / NBRC 100824 / MB4) (Thermoanaerobacter tengcongensis).